Here is a 315-residue protein sequence, read N- to C-terminus: Solute carrier family 25 member 32 (315 aa).

Solcar repeat units lie at residues 20–109 (HVRY…IKSY), 118–209 (LEAT…LKLK), and 222–306 (LSTV…VSHF). A run of 6 helical transmembrane segments spans residues 26-43 (LIAG…LHPL), 89-106 (IWGA…YNAI), 123-143 (YLVS…PLWV), 186-203 (FVPG…FMAY), 227-243 (YISV…AATY), and 281-300 (GIAP…FVVY).

It belongs to the mitochondrial carrier (TC 2.A.29) family. In terms of tissue distribution, ubiquitous.

Its subcellular location is the mitochondrion inner membrane. The catalysed reaction is FAD(in) = FAD(out). Its function is as follows. Facilitates flavin adenine dinucleotide (FAD) translocation across the mitochondrial inner membrane into the mitochondrial matrix where it acts as a redox cofactor to assist flavoenzyme activities in fundamental metabolic processes including fatty acid beta-oxidation, amino acid and choline metabolism as well as mitochondrial electron transportation. In particular, provides FAD to DLD dehydrogenase of the glycine cleavage system, part of mitochondrial one-carbon metabolic pathway involved in neural tube closure in early embryogenesis. The sequence is that of Solute carrier family 25 member 32 from Homo sapiens (Human).